Consider the following 380-residue polypeptide: DNA replication and repair protein RecF (380 aa).

Residue 30–37 coordinates ATP; that stretch reads GPNGFGKT.

This sequence belongs to the RecF family.

It is found in the cytoplasm. In terms of biological role, the RecF protein is involved in DNA metabolism; it is required for DNA replication and normal SOS inducibility. RecF binds preferentially to single-stranded, linear DNA. It also seems to bind ATP. This Mycobacterium sp. (strain JLS) protein is DNA replication and repair protein RecF.